Consider the following 152-residue polypeptide: Deoxyuridine 5'-triphosphate nucleotidohydrolase (152 aa).

Substrate is bound by residues 72–74 (RSG), asparagine 85, and 89–91 (TID).

It belongs to the dUTPase family. Mg(2+) is required as a cofactor.

It catalyses the reaction dUTP + H2O = dUMP + diphosphate + H(+). It participates in pyrimidine metabolism; dUMP biosynthesis; dUMP from dCTP (dUTP route): step 2/2. In terms of biological role, this enzyme is involved in nucleotide metabolism: it produces dUMP, the immediate precursor of thymidine nucleotides and it decreases the intracellular concentration of dUTP so that uracil cannot be incorporated into DNA. This chain is Deoxyuridine 5'-triphosphate nucleotidohydrolase, found in Rhodopseudomonas palustris (strain BisB5).